Consider the following 177-residue polypeptide: Large ribosomal subunit protein uL6 (177 aa).

This sequence belongs to the universal ribosomal protein uL6 family. Part of the 50S ribosomal subunit.

In terms of biological role, this protein binds to the 23S rRNA, and is important in its secondary structure. It is located near the subunit interface in the base of the L7/L12 stalk, and near the tRNA binding site of the peptidyltransferase center. This chain is Large ribosomal subunit protein uL6, found in Xanthobacter autotrophicus (strain ATCC BAA-1158 / Py2).